Here is a 267-residue protein sequence, read N- to C-terminus: MSGNEKEGLDASDSDFDPSDEDDEAVDAETETEAEQPADDAEEATEAEPTDDESEADEAAGPQLDEDVMPDEQSEADLLIPVEDYLGAGVHIGTQQKTQDMERFIHRVRTDGLYVLDVSMTDERIRTAADFLSNYEPEQILAASSRQYGRFPAEKFAEAIGARVRTGRFIPGTLTNPDYDGYIEPDIVVVTDPIGDAQAVKEAITVGIPVIAMCDSNNTTSNVDLVVPTNNKGRKALSVVYWLLANETLDRRGAEPTYGLDDFESDI.

Residues 1-72 (MSGNEKEGLD…QLDEDVMPDE (72 aa)) are disordered. Residues 10 to 72 (DASDSDFDPS…QLDEDVMPDE (63 aa)) are compositionally biased toward acidic residues.

It belongs to the universal ribosomal protein uS2 family. In terms of processing, the N-terminus is blocked.

The chain is Small ribosomal subunit protein uS2 (rps2) from Haloarcula marismortui (strain ATCC 43049 / DSM 3752 / JCM 8966 / VKM B-1809) (Halobacterium marismortui).